A 151-amino-acid polypeptide reads, in one-letter code: Deoxyuridine 5'-triphosphate nucleotidohydrolase (151 aa).

Residues 70–72 (RSG), asparagine 83, 87–89 (LID), and methionine 97 each bind substrate.

This sequence belongs to the dUTPase family. It depends on Mg(2+) as a cofactor.

The catalysed reaction is dUTP + H2O = dUMP + diphosphate + H(+). It participates in pyrimidine metabolism; dUMP biosynthesis; dUMP from dCTP (dUTP route): step 2/2. In terms of biological role, this enzyme is involved in nucleotide metabolism: it produces dUMP, the immediate precursor of thymidine nucleotides and it decreases the intracellular concentration of dUTP so that uracil cannot be incorporated into DNA. This Pasteurella multocida (strain Pm70) protein is Deoxyuridine 5'-triphosphate nucleotidohydrolase.